Consider the following 122-residue polypeptide: Large ribosomal subunit protein uL14 (122 aa).

This sequence belongs to the universal ribosomal protein uL14 family. As to quaternary structure, part of the 50S ribosomal subunit. Forms a cluster with proteins L3 and L19. In the 70S ribosome, L14 and L19 interact and together make contacts with the 16S rRNA in bridges B5 and B8.

Functionally, binds to 23S rRNA. Forms part of two intersubunit bridges in the 70S ribosome. This is Large ribosomal subunit protein uL14 from Cupriavidus metallidurans (strain ATCC 43123 / DSM 2839 / NBRC 102507 / CH34) (Ralstonia metallidurans).